The primary structure comprises 778 residues: Beta-phellandrene synthase (neryl-diphosphate-cyclizing), chloroplastic (778 aa).

The N-terminal 36 residues, 1-36 (MIVGYRSTIITLSHPKLGNGKTISSNAIFQRSCRVR), are a transit peptide targeting the chloroplast. Positions 531, 676, and 684 each coordinate Mg(2+). The DDXXD motif signature appears at 531 to 535 (DDHFE).

This sequence belongs to the terpene synthase family. Tpse subfamily. It depends on Mg(2+) as a cofactor. As to expression, trichomes.

It is found in the plastid. The protein localises to the chloroplast. The catalysed reaction is neryl diphosphate = beta-phellandrene + diphosphate. Its function is as follows. Monoterpene synthase catalyzing the production of beta-phellandrene from neryl diphosphate. Also produces lower amounts of delta-2-carene, alpha-phellandrene and limonene. When incubated in vitro with geranyl diphosphate, catalyzes the formation of acyclic myrcene and ocimene as major products in addition to beta-phellandrene. This chain is Beta-phellandrene synthase (neryl-diphosphate-cyclizing), chloroplastic (PHS1), found in Solanum lycopersicum (Tomato).